The chain runs to 86 residues: uncharacterized protein (86 aa).

This is an uncharacterized protein from Dictyostelium discoideum (Social amoeba).